The chain runs to 101 residues: Large ribosomal subunit protein uL24 (101 aa).

It belongs to the universal ribosomal protein uL24 family. Part of the 50S ribosomal subunit.

Its function is as follows. One of two assembly initiator proteins, it binds directly to the 5'-end of the 23S rRNA, where it nucleates assembly of the 50S subunit. In terms of biological role, one of the proteins that surrounds the polypeptide exit tunnel on the outside of the subunit. In Elusimicrobium minutum (strain Pei191), this protein is Large ribosomal subunit protein uL24.